A 402-amino-acid polypeptide reads, in one-letter code: Endo-polygalacturonase (402 aa).

The signal sequence occupies residues M1–S23. Residue D249 is the Proton donor of the active site. Residue H277 is part of the active site.

This sequence belongs to the glycosyl hydrolase 28 family. Monomer.

It is found in the secreted. It carries out the reaction (1,4-alpha-D-galacturonosyl)n+m + H2O = (1,4-alpha-D-galacturonosyl)n + (1,4-alpha-D-galacturonosyl)m.. Functionally, involved in maceration and soft-rotting of plant tissue. The sequence is that of Endo-polygalacturonase (peh) from Pectobacterium carotovorum subsp. carotovorum (Erwinia carotovora subsp. carotovora).